A 60-amino-acid polypeptide reads, in one-letter code: Toxin TdNa2 (60 aa).

In terms of domain architecture, LCN-type CS-alpha/beta spans 1–59 (RDAYPADWRGCKPSCPWGSSSWCNEECTSLGGSSGYCAWPACWCYGLPDSVRYYNNKCH). 4 cysteine pairs are disulfide-bonded: Cys-11-Cys-58, Cys-15-Cys-37, Cys-23-Cys-42, and Cys-27-Cys-44.

This sequence belongs to the long (4 C-C) scorpion toxin superfamily. Sodium channel inhibitor family. Beta subfamily. In terms of tissue distribution, expressed by the venom gland.

It localises to the secreted. Functionally, inhibits the sodium currents (Nav) in an apparent irreversible manner. Produces small depolarization and induces repetitive firing in squid axons. Is specific for arthropods (crickets, triatomides, crabs and squids), but is non-toxic to mice. The chain is Toxin TdNa2 from Tityus discrepans (Venezuelan scorpion).